The sequence spans 59 residues: Large ribosomal subunit protein uL30 (59 aa).

This sequence belongs to the universal ribosomal protein uL30 family. In terms of assembly, part of the 50S ribosomal subunit.

The sequence is that of Large ribosomal subunit protein uL30 from Erwinia tasmaniensis (strain DSM 17950 / CFBP 7177 / CIP 109463 / NCPPB 4357 / Et1/99).